Here is a 383-residue protein sequence, read N- to C-terminus: Deoxyguanosinetriphosphate triphosphohydrolase-like protein (383 aa).

Positions 62–198 (RLTHSLEVST…AALADDISYI (137 aa)) constitute an HD domain.

Belongs to the dGTPase family. Type 2 subfamily.

The chain is Deoxyguanosinetriphosphate triphosphohydrolase-like protein from Rickettsia felis (strain ATCC VR-1525 / URRWXCal2) (Rickettsia azadi).